Reading from the N-terminus, the 615-residue chain is Elongation factor 4 (615 aa).

Residues 14 to 200 (SKIRNFCIIA…KVAELIPAPT (187 aa)) form the tr-type G domain. Residues 26–31 (DHGKST) and 147–150 (NKID) contribute to the GTP site.

It belongs to the TRAFAC class translation factor GTPase superfamily. Classic translation factor GTPase family. LepA subfamily.

The protein localises to the cell membrane. The catalysed reaction is GTP + H2O = GDP + phosphate + H(+). Its function is as follows. Required for accurate and efficient protein synthesis under certain stress conditions. May act as a fidelity factor of the translation reaction, by catalyzing a one-codon backward translocation of tRNAs on improperly translocated ribosomes. Back-translocation proceeds from a post-translocation (POST) complex to a pre-translocation (PRE) complex, thus giving elongation factor G a second chance to translocate the tRNAs correctly. Binds to ribosomes in a GTP-dependent manner. This is Elongation factor 4 from Corynebacterium aurimucosum (strain ATCC 700975 / DSM 44827 / CIP 107346 / CN-1) (Corynebacterium nigricans).